A 181-amino-acid chain; its full sequence is MIRDLEYYDSPILRKVAAPIDEITDELRQLVLDMSETMTFYKGVGLAAPQVGHSVALFIMGVEKELDDGELIFCDFPKVFINPVITQKSEQLVYGNEGCLSIPGLRGEVARPDKITVTAKNLDGQPFSMTLEGFLARIVMHETDHLHGVLYIDRMSDKDKTKQFKNNLEKIRRKYSILRGL.

Positions 99 and 141 each coordinate Fe cation. Glu-142 is an active-site residue. His-145 is a binding site for Fe cation.

This sequence belongs to the polypeptide deformylase family. The cofactor is Fe(2+).

It carries out the reaction N-terminal N-formyl-L-methionyl-[peptide] + H2O = N-terminal L-methionyl-[peptide] + formate. Functionally, removes the formyl group from the N-terminal Met of newly synthesized proteins. Requires at least a dipeptide for an efficient rate of reaction. N-terminal L-methionine is a prerequisite for activity but the enzyme has broad specificity at other positions. The sequence is that of Peptide deformylase from Chlamydia muridarum (strain MoPn / Nigg).